Reading from the N-terminus, the 1204-residue chain is ATP-dependent helicase/nuclease subunit A (1204 aa).

Positions 2 to 469 constitute a UvrD-like helicase ATP-binding domain; that stretch reads TNFTKEQDQA…IILADNFRST (468 aa). 23–30 lines the ATP pocket; sequence ASAGSGKT. A UvrD-like helicase C-terminal domain is found at 497–784; it reads GQLQFGASYY…KLMTIHASKG (288 aa).

It belongs to the helicase family. AddA subfamily. Heterodimer of AddA and AddB/RexB. Mg(2+) serves as cofactor.

It catalyses the reaction Couples ATP hydrolysis with the unwinding of duplex DNA by translocating in the 3'-5' direction.. The enzyme catalyses ATP + H2O = ADP + phosphate + H(+). Functionally, the heterodimer acts as both an ATP-dependent DNA helicase and an ATP-dependent, dual-direction single-stranded exonuclease. Recognizes the chi site generating a DNA molecule suitable for the initiation of homologous recombination. The AddA nuclease domain is required for chi fragment generation; this subunit has the helicase and 3' -&gt; 5' nuclease activities. This chain is ATP-dependent helicase/nuclease subunit A, found in Lactobacillus gasseri (strain ATCC 33323 / DSM 20243 / BCRC 14619 / CIP 102991 / JCM 1131 / KCTC 3163 / NCIMB 11718 / NCTC 13722 / AM63).